A 763-amino-acid chain; its full sequence is MEDPGETGAHPLGATNLNFVPGHQQKEKPSTDPLYDTPDTRGVQAGGSQQPARTVSLRERLLITRPVWLQLRANAAAALHVLRTEPPGTFLVRKSNTRQCQALCVRLPEASGPSFVSSHYIEESTGGVSLEGSELMFQDLVQLICGYCRTRAIHQAATHKELEAISHLGMEFWSSSLNTKDQQRPSEAPPIPRLKARSPQELDQGTGAALCFFNPLFPGDLGPTKREKFKRSFKVRVSTETSSPLSPPAVPPPPVPVLPGTSSSQTERLPPRQLLQRESSVGYRVPGSAASPCLPPLPSLQEVDCCSPSSSEEEGSSGSPTTSPRLSRPRHRRPLLRSMSSAFCSLLAPERQVGRAATMLMQNRYTAVGQLVQDLLTQVRAGPEPRELQGIRQALSRARAMLSAELGPEKLLPPERLELVLEKSLHRSVLKPLRPILAARLRRRLSADGSLGRLAEGFRLARTQGPGAFGSHLTLSSPVETEQVRQKLLQLLRAYSPSAQVKWLLQACKLLYTALKSQAGENAGADEFLPLLSLVLAQCDLPDLLLEAEYMSELLEPTLLTGEGGYYLTSLSASLALLSGLSQARALPLSPAQELQRSLALWEQRRLPATHSFQHLLRVAYQDPSTGCTSKTLAVPPGSSIATLSQLCATKFRVTQPDAFGLFLYKDQGYHRLPPEALAHRLPATGYLIYRRAERPETQGAVAEKAKTGSKGPEAGAWEEETGGLNREGKPRIAVDQEGKDQARGGHIGPEEQKAEGSQALEE.

At M1 the chain carries N-acetylmethionine. The segment at 1–52 is disordered; it reads MEDPGETGAHPLGATNLNFVPGHQQKEKPSTDPLYDTPDTRGVQAGGSQQPA. At Y35 the chain carries Phosphotyrosine; by ABL1 and ABL2. In terms of domain architecture, SH2 spans 68 to 151; that stretch reads WLQLRANAAA…QLICGYCRTR (84 aa). Disordered stretches follow at residues 177–200, 238–273, and 301–331; these read LNTK…RSPQ, STET…PPRQ, and QEVD…RPRH. S198, S246, S319, and S323 each carry phosphoserine. The segment covering 245 to 257 has biased composition (pro residues); sequence LSPPAVPPPPVPV. Positions 316 to 326 are enriched in low complexity; it reads SSGSPTTSPRL. S340 is subject to Phosphoserine; by PKD/PRKD1. The 143-residue stretch at 445–587 folds into the VPS9 domain; that stretch reads LSADGSLGRL…LSGLSQARAL (143 aa). A Phosphoserine modification is found at S598. The Ras-associating domain occupies 613–695; it reads FQHLLRVAYQ…GYLIYRRAER (83 aa). R681 carries the omega-N-methylarginine modification. The interval 698-763 is disordered; that stretch reads TQGAVAEKAK…KAEGSQALEE (66 aa). The segment covering 727 to 755 has biased composition (basic and acidic residues); sequence REGKPRIAVDQEGKDQARGGHIGPEEQKA.

This sequence belongs to the RIN (Ras interaction/interference) family. In terms of assembly, interacts with the GTP-bound form of Ras proteins (NRAS, HRAS and KRAS). This interaction prevents the association between RAF1 and Ras. Interacts with 14-3-3 proteins YWHAB, YWHAE and YWHAZ when phosphorylated on Ser-340. Interacts with the SH3 domain of ABL1 and ABL2. Interacts with RAB5A. The interaction with Ras is probably regulated and antagonized by the interaction with 14-3-3 proteins. The interaction with 14-3-3 proteins is regulated by phosphorylation on Ser-340. Post-translationally, phosphorylated on tyrosine residues by ABL1 and ABL2. Phosphorylation at Ser-340 by PRKD1 induces interaction with 14-3-3 proteins. Highly expressed in brain. Weakly or no expressed in other tissues, except in testis, where it is expressed at intermediate level. In brain, it is mainly expressed in postnatal forebrain neurons in which it is localized in dendrites and colocalizes with Ras.

Its subcellular location is the cytoplasm. The protein localises to the membrane. The protein resides in the cytoskeleton. Its function is as follows. Ras effector protein, which may serve as an inhibitory modulator of neuronal plasticity in aversive memory formation. Can affect Ras signaling at different levels. First, by competing with RAF1 protein for binding to activated Ras. Second, by enhancing signaling from ABL1 and ABL2, which regulate cytoskeletal remodeling. Third, by activating RAB5A, possibly by functioning as a guanine nucleotide exchange factor (GEF) for RAB5A, by exchanging bound GDP for free GTP, and facilitating Ras-activated receptor endocytosis. The chain is Ras and Rab interactor 1 (Rin1) from Mus musculus (Mouse).